We begin with the raw amino-acid sequence, 625 residues long: DNA mismatch repair protein MutL (625 aa).

A disordered region spans residues 404-427 (PPPRNAPQSTGMPSMAGTGLPATS).

The protein belongs to the DNA mismatch repair MutL/HexB family.

In terms of biological role, this protein is involved in the repair of mismatches in DNA. It is required for dam-dependent methyl-directed DNA mismatch repair. May act as a 'molecular matchmaker', a protein that promotes the formation of a stable complex between two or more DNA-binding proteins in an ATP-dependent manner without itself being part of a final effector complex. This is DNA mismatch repair protein MutL from Xanthomonas oryzae pv. oryzae (strain MAFF 311018).